The sequence spans 359 residues: Pyruvate dehydrogenase E1 component subunit beta, mitochondrial (359 aa).

Residues 1–30 constitute a mitochondrion transit peptide; the sequence is MAVVAVLVRKPLEQVSGLLRRRFHRTAPAA. Position 67 is a phosphotyrosine (Y67). E89 serves as a coordination point for thiamine diphosphate. K(+)-binding residues include I142, A190, I191, D193, and N195. The residue at position 354 (K354) is an N6-acetyllysine.

As to quaternary structure, heterotetramer of two PDHA1 and two PDHB subunits. The heterotetramer interacts with DLAT, and is part of the multimeric pyruvate dehydrogenase complex that contains multiple copies of pyruvate dehydrogenase (E1), dihydrolipoamide acetyltransferase (DLAT, E2) and lipoamide dehydrogenase (DLD, E3). These subunits are bound to an inner core composed of about 48 DLAT and 12 PDHX molecules. Interacts with DLAT. Thiamine diphosphate serves as cofactor.

Its subcellular location is the mitochondrion matrix. It carries out the reaction N(6)-[(R)-lipoyl]-L-lysyl-[protein] + pyruvate + H(+) = N(6)-[(R)-S(8)-acetyldihydrolipoyl]-L-lysyl-[protein] + CO2. The pyruvate dehydrogenase complex catalyzes the overall conversion of pyruvate to acetyl-CoA and CO(2), and thereby links the glycolytic pathway to the tricarboxylic cycle. This is Pyruvate dehydrogenase E1 component subunit beta, mitochondrial (PDHB) from Bos taurus (Bovine).